The chain runs to 174 residues: Gamma-crystallin C (174 aa).

2 Beta/gamma crystallin 'Greek key' domains span residues 2-40 (GKIT…RVES) and 41-83 (GCWM…CLIP). Position 23 is an S-methylcysteine (cysteine 23). Positions 84 to 87 (QTGS) are connecting peptide. Beta/gamma crystallin 'Greek key' domains are found at residues 88-128 (HRLR…HVLE) and 129-171 (GCWV…RRVV).

It belongs to the beta/gamma-crystallin family. In terms of assembly, monomer.

Crystallins are the dominant structural components of the vertebrate eye lens. The polypeptide is Gamma-crystallin C (CRYGC) (Macaca mulatta (Rhesus macaque)).